We begin with the raw amino-acid sequence, 396 residues long: Elongation factor Tu 2 (396 aa).

The region spanning 10–206 (KPHVNVGTIG…ALDTYIPTPK (197 aa)) is the tr-type G domain. The interval 19–26 (GHVDHGKT) is G1. A GTP-binding site is contributed by 19–26 (GHVDHGKT). Thr26 is a binding site for Mg(2+). Residues 60–64 (GITIS) are G2. The G3 stretch occupies residues 81 to 84 (DCPG). GTP is bound by residues 81–85 (DCPGH) and 136–139 (NKAD). A G4 region spans residues 136–139 (NKAD). The interval 174 to 176 (SAL) is G5.

This sequence belongs to the TRAFAC class translation factor GTPase superfamily. Classic translation factor GTPase family. EF-Tu/EF-1A subfamily. Monomer.

It localises to the cytoplasm. It catalyses the reaction GTP + H2O = GDP + phosphate + H(+). In terms of biological role, GTP hydrolase that promotes the GTP-dependent binding of aminoacyl-tRNA to the A-site of ribosomes during protein biosynthesis. The chain is Elongation factor Tu 2 from Ruthia magnifica subsp. Calyptogena magnifica.